Here is a 317-residue protein sequence, read N- to C-terminus: tRNA dimethylallyltransferase (317 aa).

14-21 is an ATP binding site; it reads GPTASGKS. Residue 16-21 participates in substrate binding; the sequence is TASGKS. Interaction with substrate tRNA regions lie at residues 39-42 and 163-167; these read DSVL and QRIQR.

The protein belongs to the IPP transferase family. Monomer. Requires Mg(2+) as cofactor.

It catalyses the reaction adenosine(37) in tRNA + dimethylallyl diphosphate = N(6)-dimethylallyladenosine(37) in tRNA + diphosphate. Functionally, catalyzes the transfer of a dimethylallyl group onto the adenine at position 37 in tRNAs that read codons beginning with uridine, leading to the formation of N6-(dimethylallyl)adenosine (i(6)A). This chain is tRNA dimethylallyltransferase, found in Xylella fastidiosa (strain M12).